The primary structure comprises 283 residues: Putative replication protein XF_b0001 (283 aa).

The polypeptide is Putative replication protein XF_b0001 (Xylella fastidiosa (strain 9a5c)).